The sequence spans 149 residues: Cytochrome c-556 (149 aa).

An N-terminal signal peptide occupies residues 1–20; sequence MLRTVIVAGALVLTASAVMA. The heme c site is built by Met32, Cys137, Cys140, and His141.

As to quaternary structure, monomer. In terms of processing, binds 1 heme c group covalently per subunit.

Its function is as follows. Low-spin monoheme cytochrome c. This Rhodopseudomonas palustris (strain ATCC BAA-98 / CGA009) protein is Cytochrome c-556.